The chain runs to 182 residues: Small ribosomal subunit protein uS4c (182 aa).

In terms of domain architecture, S4 RNA-binding spans 82–143 (MRLDNILFRL…KQRSKALIQN (62 aa)).

It belongs to the universal ribosomal protein uS4 family. As to quaternary structure, part of the 30S ribosomal subunit. Contacts protein S5. The interaction surface between S4 and S5 is involved in control of translational fidelity.

The protein resides in the plastid. It localises to the chloroplast. In terms of biological role, one of the primary rRNA binding proteins, it binds directly to 16S rRNA where it nucleates assembly of the body of the 30S subunit. Its function is as follows. With S5 and S12 plays an important role in translational accuracy. The chain is Small ribosomal subunit protein uS4c (rps4) from Iris domestica (Leopard lily).